The primary structure comprises 130 residues: Small ribosomal subunit protein bS6 (130 aa).

The disordered stretch occupies residues 100 to 130 (SPMVKAKDERRERREDFAEAGDDVDAGDSEE). The segment covering 104 to 116 (KAKDERRERREDF) has biased composition (basic and acidic residues). Residues 117 to 130 (AEAGDDVDAGDSEE) are compositionally biased toward acidic residues.

It belongs to the bacterial ribosomal protein bS6 family.

Binds together with bS18 to 16S ribosomal RNA. This chain is Small ribosomal subunit protein bS6, found in Pectobacterium carotovorum subsp. carotovorum (strain PC1).